Here is a 236-residue protein sequence, read N- to C-terminus: Probable fimbrial chaperone EcpE (236 aa).

The signal sequence occupies residues 1 to 27; that stretch reads MFRRRGVTLTKALLTVVCMLAAPLTQA.

This sequence belongs to the EcpB/EcpE family.

Part of the ecpRABCDE operon, which encodes the E.coli common pilus (ECP). ECP is found in both commensal and pathogenic strains and plays a dual role in early-stage biofilm development and host cell recognition. This chain is Probable fimbrial chaperone EcpE (ecpE), found in Escherichia coli O18:K1:H7 (strain IHE3034 / ExPEC).